We begin with the raw amino-acid sequence, 810 residues long: MRISLNWLRELVEIKLSPEELAHILTMAGFEVEDIEDRRTWANGVVVGRVLERQPHPNADKLSVCQVDVGATETLNIVCGAPNVRADIYVPVATVGAYLPNIDLKIKPAKLRGVPSQGMICSLKELGLPSEVDGIYIFPQENLPLGSDVRPLLGLDDVILDVTATANRADALSMVGIAREVAALTDAKLSIPKPGEAFVSESVGKLGLKIADTQACPAYIGTVIEQVKIASSPEWLQQRLRSAGVRPISNVVDITNYVLLEWGQPLHAFDQERLKSVANADNLTIGVRCANQGETLKTLDGQTRNLTTQNLLITANDQPVALAGVMGGEETEVHEGTQSLILEAALFDSVAIRRSSRSVGLRSEASGRYERGVNRAELEIANRRALSLISELADGVIVHQEIADTRPDPTTWSRSIFLRLDRVNEVLGPINVGETGELEAKDVERTLTALGCELTPAGEGTWNVSVPPYRYRDLEREIDLIEEVARLYGYDNFCDTLPDKAEAGYLPVDQELVRKLRAALRAEGLTELIHYSLVKPGEDRQIVLSNPLFVEYSALRTDLLAGLIDAFQYNLEQGNGSLNGFEIGRIFWQEEDGLQEKDAIAGIIGGDTSLGKWSKGSKDQPLTWFEAKGILESVFQQLGILVEYQPDCRDERLHPGRTASLWIGGNRLGIFGQLHPQLRRDKDLPESVYVFQLDLDVLLDALDKDEILVPAFKPYSTYPASDRDIAFFAPVKISVSEIEKAINKAGKGLLESVELFDEYRGENVPQGQRSLAFRLVYRASDRTLTDTEVEPVHNKVREALVEKFGVNLRS.

The tRNA-binding domain occupies 39–150 (RTWANGVVVG…ENLPLGSDVR (112 aa)). Residues 411–495 (TWSRSIFLRL…RLYGYDNFCD (85 aa)) enclose the B5 domain. Mg(2+) is bound by residues D473, D479, E482, and E483. The FDX-ACB domain maps to 716–809 (STYPASDRDI…LVEKFGVNLR (94 aa)).

Belongs to the phenylalanyl-tRNA synthetase beta subunit family. Type 1 subfamily. Tetramer of two alpha and two beta subunits. It depends on Mg(2+) as a cofactor.

It localises to the cytoplasm. It carries out the reaction tRNA(Phe) + L-phenylalanine + ATP = L-phenylalanyl-tRNA(Phe) + AMP + diphosphate + H(+). The polypeptide is Phenylalanine--tRNA ligase beta subunit (Trichormus variabilis (strain ATCC 29413 / PCC 7937) (Anabaena variabilis)).